The chain runs to 344 residues: tRNA N6-adenosine threonylcarbamoyltransferase (344 aa).

The Fe cation site is built by His-111 and His-115. Substrate-binding positions include 136–140 (LVSGG), Asp-169, Gly-182, and Asn-279. Asp-307 lines the Fe cation pocket.

This sequence belongs to the KAE1 / TsaD family. Fe(2+) serves as cofactor.

It is found in the cytoplasm. The catalysed reaction is L-threonylcarbamoyladenylate + adenosine(37) in tRNA = N(6)-L-threonylcarbamoyladenosine(37) in tRNA + AMP + H(+). Functionally, required for the formation of a threonylcarbamoyl group on adenosine at position 37 (t(6)A37) in tRNAs that read codons beginning with adenine. Is involved in the transfer of the threonylcarbamoyl moiety of threonylcarbamoyl-AMP (TC-AMP) to the N6 group of A37, together with TsaE and TsaB. TsaD likely plays a direct catalytic role in this reaction. The sequence is that of tRNA N6-adenosine threonylcarbamoyltransferase from Mannheimia succiniciproducens (strain KCTC 0769BP / MBEL55E).